A 384-amino-acid chain; its full sequence is 8-amino-7-oxononanoate synthase (384 aa).

Arginine 21 provides a ligand contact to substrate. 108–109 provides a ligand contact to pyridoxal 5'-phosphate; sequence GF. Histidine 133 contributes to the substrate binding site. Residues serine 179, histidine 207, and threonine 233 each contribute to the pyridoxal 5'-phosphate site. At lysine 236 the chain carries N6-(pyridoxal phosphate)lysine. Threonine 352 is a binding site for substrate.

The protein belongs to the class-II pyridoxal-phosphate-dependent aminotransferase family. BioF subfamily. Homodimer. Pyridoxal 5'-phosphate serves as cofactor.

It catalyses the reaction 6-carboxyhexanoyl-[ACP] + L-alanine + H(+) = (8S)-8-amino-7-oxononanoate + holo-[ACP] + CO2. The protein operates within cofactor biosynthesis; biotin biosynthesis. In terms of biological role, catalyzes the decarboxylative condensation of pimeloyl-[acyl-carrier protein] and L-alanine to produce 8-amino-7-oxononanoate (AON), [acyl-carrier protein], and carbon dioxide. This chain is 8-amino-7-oxononanoate synthase, found in Escherichia coli (strain UTI89 / UPEC).